The chain runs to 320 residues: Phosphate acyltransferase (320 aa).

The protein belongs to the PlsX family. As to quaternary structure, homodimer. Probably interacts with PlsY.

It is found in the cytoplasm. It carries out the reaction a fatty acyl-[ACP] + phosphate = an acyl phosphate + holo-[ACP]. It functions in the pathway lipid metabolism; phospholipid metabolism. In terms of biological role, catalyzes the reversible formation of acyl-phosphate (acyl-PO(4)) from acyl-[acyl-carrier-protein] (acyl-ACP). This enzyme utilizes acyl-ACP as fatty acyl donor, but not acyl-CoA. This is Phosphate acyltransferase from Syntrophomonas wolfei subsp. wolfei (strain DSM 2245B / Goettingen).